Here is a 73-residue protein sequence, read N- to C-terminus: UPF0346 protein Lreu_0775 (73 aa).

It belongs to the UPF0346 family.

The sequence is that of UPF0346 protein Lreu_0775 from Limosilactobacillus reuteri (strain DSM 20016) (Lactobacillus reuteri).